The following is a 493-amino-acid chain: Acetylcholine receptor subunit beta-type unc-29 (493 aa).

Residues 1 to 26 (MRTNRLSWILVLSVVIFLVIINTINA) form the signal peptide. Asn-25 and Asn-50 each carry an N-linked (GlcNAc...) asparagine glycan. Topologically, residues 27-232 (SDDEERLMVD…QVRIRRKTLF (206 aa)) are extracellular. Cys-155 and Cys-169 are disulfide-bonded. 3 helical membrane passes run 233-254 (YTVV…VFFL), 262-280 (ITLT…LLVS), and 296-317 (YLLL…IINV). Residues 318 to 445 (YFRGPRTHRM…WKYVAMIIDR (128 aa)) lie on the Cytoplasmic side of the membrane. Residues 446–466 (LLLYVFFGITVGGTCGILFSA) form a helical membrane-spanning segment.

Belongs to the ligand-gated ion channel (TC 1.A.9) family. Acetylcholine receptor (TC 1.A.9.1) subfamily. As to quaternary structure, interacts with lev-1. Component of nicotinic acetylcholine receptor composed of 2 non-alpha subunits lev-1 and unc-29, and 3 alpha subunits unc-38, unc-63 and lev-8. Interacts with oig-4. Interacts with crld-1.

Its subcellular location is the postsynaptic cell membrane. The protein resides in the cell membrane. Its function is as follows. Non-alpha subunit of nicotinic acetylcholine receptor (nAChR). Involved in nAChR sensitivity to nicotine and levasimole. The chain is Acetylcholine receptor subunit beta-type unc-29 from Caenorhabditis elegans.